Consider the following 50-residue polypeptide: Alpha-conotoxin CnIG (50 aa).

Positions 1-7 are cleaved as a signal peptide; the sequence is LTTTVVS. Residues 1–13 are compositionally biased toward polar residues; the sequence is LTTTVVSFPSDSA. The segment at 1–26 is disordered; sequence LTTTVVSFPSDSASDGRDNEAKDERS. Positions 8-35 are excised as a propeptide; the sequence is FPSDSASDGRDNEAKDERSDMYELKRNG. A compositionally biased stretch (basic and acidic residues) spans 14–26; that stretch reads SDGRDNEAKDERS. 2 cysteine pairs are disulfide-bonded: cysteine 37-cysteine 42 and cysteine 38-cysteine 48. Cysteine 48 is subject to Cysteine amide.

Belongs to the conotoxin A superfamily. As to expression, expressed by the venom duct.

The protein localises to the secreted. The protein is Alpha-conotoxin CnIG of Conus consors (Singed cone).